The chain runs to 305 residues: Oxygen-dependent coproporphyrinogen-III oxidase (305 aa).

A substrate-binding site is contributed by serine 92. A divalent metal cation-binding residues include histidine 96 and histidine 106. Histidine 106 functions as the Proton donor in the catalytic mechanism. 108–110 (NVR) serves as a coordination point for substrate. Histidine 145 and histidine 175 together coordinate a divalent metal cation. An important for dimerization region spans residues 239–274 (YVEFNLLFDRGTLFGLQSGGRAESILISLPPLVRWE). 257–259 (GGR) is a substrate binding site.

Belongs to the aerobic coproporphyrinogen-III oxidase family. As to quaternary structure, homodimer. The cofactor is a divalent metal cation.

The protein resides in the cytoplasm. The catalysed reaction is coproporphyrinogen III + O2 + 2 H(+) = protoporphyrinogen IX + 2 CO2 + 2 H2O. It participates in porphyrin-containing compound metabolism; protoporphyrin-IX biosynthesis; protoporphyrinogen-IX from coproporphyrinogen-III (O2 route): step 1/1. Functionally, involved in the heme biosynthesis. Catalyzes the aerobic oxidative decarboxylation of propionate groups of rings A and B of coproporphyrinogen-III to yield the vinyl groups in protoporphyrinogen-IX. The polypeptide is Oxygen-dependent coproporphyrinogen-III oxidase (Xylella fastidiosa (strain 9a5c)).